The primary structure comprises 230 residues: Flagellar L-ring protein (230 aa).

An N-terminal signal peptide occupies residues 1–21 (MMLKTVLRLPVCAALLALAAG). Residue Cys22 is the site of N-palmitoyl cysteine attachment. Cys22 carries S-diacylglycerol cysteine lipidation. The segment at 34 to 53 (PLTAPPPPPPQPSARPNGSI) is disordered. Residues 36–46 (TAPPPPPPQPS) are compositionally biased toward pro residues.

Belongs to the FlgH family. In terms of assembly, the basal body constitutes a major portion of the flagellar organelle and consists of four rings (L,P,S, and M) mounted on a central rod.

Its subcellular location is the cell outer membrane. The protein resides in the bacterial flagellum basal body. Assembles around the rod to form the L-ring and probably protects the motor/basal body from shearing forces during rotation. This Bordetella parapertussis (strain 12822 / ATCC BAA-587 / NCTC 13253) protein is Flagellar L-ring protein.